The chain runs to 250 residues: Adenosylcobinamide-GDP ribazoletransferase (250 aa).

A run of 6 helical transmembrane segments spans residues 32–52 (KGIIYFPVVGGIIGALLMVAY), 59–79 (LAHSLSALLTVGFFVFLTGGL), 113–133 (GVLAMVFILLLKLYGIQGLGE), 136–156 (IYWGIILMPVMGRQAIVYGCY), 185–205 (LTFILAAMHLPSLIFALLLPI), and 230–250 (CELTEGCYLLFILLITGAGLF).

The protein belongs to the CobS family. Mg(2+) serves as cofactor.

It localises to the cell membrane. The catalysed reaction is alpha-ribazole + adenosylcob(III)inamide-GDP = adenosylcob(III)alamin + GMP + H(+). The enzyme catalyses alpha-ribazole 5'-phosphate + adenosylcob(III)inamide-GDP = adenosylcob(III)alamin 5'-phosphate + GMP + H(+). It functions in the pathway cofactor biosynthesis; adenosylcobalamin biosynthesis; adenosylcobalamin from cob(II)yrinate a,c-diamide: step 7/7. Joins adenosylcobinamide-GDP and alpha-ribazole to generate adenosylcobalamin (Ado-cobalamin). Also synthesizes adenosylcobalamin 5'-phosphate from adenosylcobinamide-GDP and alpha-ribazole 5'-phosphate. This is Adenosylcobinamide-GDP ribazoletransferase from Alkaliphilus metalliredigens (strain QYMF).